The following is a 502-amino-acid chain: MEKFQGYLEFDGARQQSFLYPLFFRDYIYVLAYDHGLNRLNRNRPIFLENADYDKKYSSLIVKRLILRMYEQNRLIIPTKDLNKNLGHTNNFYYQMISVLFAVIVEIPFSLRLGSSIEGKNVKKSYNLQSLHSIFPFLEDKLSHFNYVLDVLIPYPIHLEILVQTLRYRVKDASSLHFFRFCLYEYCNWKNFDSKKKSILNPRFLLFLYNSHVCEYESIFFFLRKQSSHLRSTSYDVFFERILFYGKIQHFFKVFVNNFSALLGLLKDPFLHYVRYHGKYILATKDTPLLMNKWKYYFVNLWQCYFSVWFQSQKVNINQLSKDNLEFLGYLSSLRLNPLVVRSQMLENSFLIDNVRIKLDSNIPISSIIGSLAKDKFCNVLGHPISKATWTDSSDSDILNRFVRICRNISHYYSGSSNKKNLYRIKYILRLCCVKTLARKHKSTVRAFLKRLGSGLLEEFLTGEDQVLSLIFPRSDYASKRLYRVRVWYLDILYLNDLVNHE.

Belongs to the intron maturase 2 family. MatK subfamily.

Its subcellular location is the plastid. The protein resides in the chloroplast. Its function is as follows. Usually encoded in the trnK tRNA gene intron. Probably assists in splicing its own and other chloroplast group II introns. The protein is Maturase K of Brassica campestris (Field mustard).